We begin with the raw amino-acid sequence, 220 residues long: Charged multivesicular body protein 5 (220 aa).

The span at 1–10 shows a compositional bias: basic residues; sequence MNRIFGRGKP. The tract at residues 1-27 is disordered; sequence MNRIFGRGKPKGPPPNLTDCISGVDSR. 2 coiled-coil regions span residues 25–55 and 121–153; these read DSRA…MRDG and KNVK…SRSY. Residues 178 to 206 are disordered; the sequence is DDNSYLDEASSAPAIPEGAPGDRTTNRDG.

Belongs to the SNF7 family. Probable peripherally associated component of the endosomal sorting required for transport complex III (ESCRT-III).

Its subcellular location is the cytoplasm. It is found in the cytosol. The protein localises to the endosome membrane. Functionally, probable peripherally associated component of the endosomal sorting required for transport complex III (ESCRT-III) which is involved in multivesicular bodies (MVBs) formation and sorting of endosomal cargo proteins into MVBs. MVBs contain intraluminal vesicles (ILVs) that are generated by invagination and scission from the limiting membrane of the endosome and mostly are delivered to lysosomes enabling degradation of membrane proteins, such as stimulated growth factor receptors, lysosomal enzymes and lipids. The chain is Charged multivesicular body protein 5 (chmp5) from Danio rerio (Zebrafish).